A 352-amino-acid chain; its full sequence is Biotin synthase (352 aa).

Residues 44 to 262 (NRVQVSTLLS…LAVARIMMPK (219 aa)) form the Radical SAM core domain. C59, C63, and C66 together coordinate [4Fe-4S] cluster. [2Fe-2S] cluster-binding residues include C103, C134, C194, and R266.

This sequence belongs to the radical SAM superfamily. Biotin synthase family. In terms of assembly, homodimer. It depends on [4Fe-4S] cluster as a cofactor. [2Fe-2S] cluster serves as cofactor.

It catalyses the reaction (4R,5S)-dethiobiotin + (sulfur carrier)-SH + 2 reduced [2Fe-2S]-[ferredoxin] + 2 S-adenosyl-L-methionine = (sulfur carrier)-H + biotin + 2 5'-deoxyadenosine + 2 L-methionine + 2 oxidized [2Fe-2S]-[ferredoxin]. It functions in the pathway cofactor biosynthesis; biotin biosynthesis; biotin from 7,8-diaminononanoate: step 2/2. Catalyzes the conversion of dethiobiotin (DTB) to biotin by the insertion of a sulfur atom into dethiobiotin via a radical-based mechanism. The protein is Biotin synthase of Pseudomonas aeruginosa (strain LESB58).